We begin with the raw amino-acid sequence, 1004 residues long: Zinc finger protein 316 (1004 aa).

Residues 1–148 are disordered; that stretch reads MAALHTTPDS…EEEEDEDEDD (148 aa). A2 is subject to N-acetylalanine. The residue at position 7 (T7) is a Phosphothreonine. Position 10 is a phosphoserine (S10). Acidic residues predominate over residues 21–60; it reads GSECDPDQEEEEEEEEKGEEVQEVEEEEEEIVVEEEEEGV. Positions 61-72 are enriched in low complexity; sequence AEVVQDAQVEAV. Acidic residues predominate over residues 73–95; that stretch reads AEVEVEADVEEEDVKEVLAEEEC. S112 carries the post-translational modification Phosphoserine. Residues 132-148 are compositionally biased toward acidic residues; the sequence is EDLEEEEEEEEDEDEDD. In terms of domain architecture, KRAB spans 158 to 229; sequence VTFEDVAVYF…DSPRPEEGDI (72 aa). C2H2-type zinc fingers lie at residues 345–367, 373–395, 401–423, 429–451, and 457–479; these read TTCD…QRYH, FGCE…QRTH, FPCP…RRIH, YRCA…QRTH, and YPCS…QAVH. A C2H2-type 6; degenerate zinc finger spans residues 485–512; it reads HCCPDCGQAFRLRADFQRHRRGGGCAEA. The tract at residues 508–574 is disordered; that stretch reads GCAEAGGDGP…TPSGKVDPAP (67 aa). A compositionally biased stretch (acidic residues) spans 531–557; the sequence is EDTDPGPEGSEVGEADGEAEAAAEERE. 5 C2H2-type zinc fingers span residues 691-713, 719-741, 747-769, 775-797, and 803-825; these read WICS…QRYH, HRCA…RRTH, FPCP…VRGH, FVCG…GRAH, and YACG…QWAH. K829 is covalently cross-linked (Glycyl lysine isopeptide (Lys-Gly) (interchain with G-Cter in SUMO2)). C2H2-type zinc fingers lie at residues 831–853, 859–881, 887–909, and 915–937; these read HRCP…RRTH, FRCA…RRGH, FPCP…QRTH, and YACA…MKTH. The tract at residues 936–976 is disordered; it reads THRGATAAPGSGSAPAPAPKPEAAAKGPSSAGPGERGSALL. The segment covering 939–968 has biased composition (low complexity); the sequence is GATAAPGSGSAPAPAPKPEAAAKGPSSAGP. K955 participates in a covalent cross-link: Glycyl lysine isopeptide (Lys-Gly) (interchain with G-Cter in SUMO2).

Belongs to the krueppel C2H2-type zinc-finger protein family.

Its subcellular location is the nucleus. May be involved in transcriptional regulation. This Homo sapiens (Human) protein is Zinc finger protein 316 (ZNF316).